The following is a 161-amino-acid chain: ATP synthase subunit b (161 aa).

The chain crosses the membrane as a helical span at residues 10 to 29 (SVIQLMSFFLLLYILKKFLY).

Belongs to the ATPase B chain family. As to quaternary structure, F-type ATPases have 2 components, F(1) - the catalytic core - and F(0) - the membrane proton channel. F(1) has five subunits: alpha(3), beta(3), gamma(1), delta(1), epsilon(1). F(0) has three main subunits: a(1), b(2) and c(10-14). The alpha and beta chains form an alternating ring which encloses part of the gamma chain. F(1) is attached to F(0) by a central stalk formed by the gamma and epsilon chains, while a peripheral stalk is formed by the delta and b chains.

Its subcellular location is the cell inner membrane. Functionally, f(1)F(0) ATP synthase produces ATP from ADP in the presence of a proton or sodium gradient. F-type ATPases consist of two structural domains, F(1) containing the extramembraneous catalytic core and F(0) containing the membrane proton channel, linked together by a central stalk and a peripheral stalk. During catalysis, ATP synthesis in the catalytic domain of F(1) is coupled via a rotary mechanism of the central stalk subunits to proton translocation. Its function is as follows. Component of the F(0) channel, it forms part of the peripheral stalk, linking F(1) to F(0). In Thermosipho melanesiensis (strain DSM 12029 / CIP 104789 / BI429), this protein is ATP synthase subunit b.